We begin with the raw amino-acid sequence, 301 residues long: Peptidyl-prolyl cis-trans isomerase E (301 aa).

Positions 5 to 83 (KRVLYVGGLA…GRTIRVNLAK (79 aa)) constitute an RRM domain. A phosphoserine mark is found at S91, S97, and S119. A disordered region spans residues 107 to 140 (GKTLEENKEEEGSEPPKAETQEGEPAAKKARSNP). In terms of domain architecture, PPIase cyclophilin-type spans 143-299 (YMDIKIGNKP…QKVIIADCGE (157 aa)).

Belongs to the cyclophilin-type PPIase family. PPIase E subfamily. As to quaternary structure, identified in the spliceosome C complex. Component of the XAB2 complex, a multimeric protein complex composed of XAB2, PRPF19, AQR, ZNF830, ISY1, and PPIE. Identified in a pentameric intron-binding (IB) complex composed of AQR, XAB2, ISY1, ZNF830 and PPIE that is incorporated into the spliceosome as a preassembled complex. The IB complex does not contain PRPF19. Interacts (via RNA-binding domain) with KMT2A (via the third PHD-type zinc-finger).

The protein resides in the nucleus. The catalysed reaction is [protein]-peptidylproline (omega=180) = [protein]-peptidylproline (omega=0). In terms of biological role, involved in pre-mRNA splicing as component of the spliceosome. Combines RNA-binding and PPIase activities. Binds mRNA and has a preference for single-stranded RNA molecules with poly-A and poly-U stretches, suggesting it binds to the poly(A)-region in the 3'-UTR of mRNA molecules. Catalyzes the cis-trans isomerization of proline imidic peptide bonds in proteins. Inhibits KMT2A activity; this requires proline isomerase activity. The sequence is that of Peptidyl-prolyl cis-trans isomerase E (PPIE) from Pongo abelii (Sumatran orangutan).